Consider the following 188-residue polypeptide: Small ribosomal subunit protein bS16 (188 aa).

The segment at 155 to 188 (IAAASATEEAATEEVAEAAEEAPAAEENNETTEA) is disordered. Over residues 164–188 (AATEEVAEAAEEAPAAEENNETTEA) the composition is skewed to acidic residues.

This sequence belongs to the bacterial ribosomal protein bS16 family.

The chain is Small ribosomal subunit protein bS16 from Flavobacterium johnsoniae (strain ATCC 17061 / DSM 2064 / JCM 8514 / BCRC 14874 / CCUG 350202 / NBRC 14942 / NCIMB 11054 / UW101) (Cytophaga johnsonae).